A 558-amino-acid polypeptide reads, in one-letter code: S-layer protein (558 aa).

A signal peptide spans 1–28 (MAMSLKKIGAIAVGGAMVATALASGVAA). Asn112, Asn138, Asn158, Asn197, Asn226, Asn291, and Asn374 each carry an N-linked (GlcNAc...) asparagine glycan.

Belongs to the Mj S-layer protein family.

It is found in the secreted. It localises to the cell wall. The protein resides in the S-layer. Functionally, S-layer protein. The S-layer is a paracrystalline mono-layered assembly of proteins which coat the surface of the cell. In Methanocaldococcus jannaschii (strain ATCC 43067 / DSM 2661 / JAL-1 / JCM 10045 / NBRC 100440) (Methanococcus jannaschii), this protein is S-layer protein (sla).